The sequence spans 309 residues: uncharacterized protein (309 aa).

A helical transmembrane segment spans residues Arg-23–Ile-39.

Belongs to the NmrA-type oxidoreductase family.

It is found in the membrane. This is an uncharacterized protein from Saccharomyces cerevisiae (strain ATCC 204508 / S288c) (Baker's yeast).